The sequence spans 1031 residues: Putative glycine dehydrogenase (decarboxylating), mitochondrial (1031 aa).

A mitochondrion-targeting transit peptide spans 1-49 (MFDSFMKRNQLALIMFRACSKLQYHGVNTSLSRHLFLAKRNLSISSACL). Residue K783 is modified to N6-(pyridoxal phosphate)lysine.

The protein belongs to the GcvP family. It depends on pyridoxal 5'-phosphate as a cofactor.

The protein resides in the mitochondrion. It catalyses the reaction N(6)-[(R)-lipoyl]-L-lysyl-[glycine-cleavage complex H protein] + glycine + H(+) = N(6)-[(R)-S(8)-aminomethyldihydrolipoyl]-L-lysyl-[glycine-cleavage complex H protein] + CO2. In terms of biological role, the glycine cleavage system catalyzes the degradation of glycine. The P protein binds the alpha-amino group of glycine through its pyridoxal phosphate cofactor; CO(2) is released and the remaining methylamine moiety is then transferred to the lipoamide cofactor of the H protein. In Schizosaccharomyces pombe (strain 972 / ATCC 24843) (Fission yeast), this protein is Putative glycine dehydrogenase (decarboxylating), mitochondrial (gcv2).